Reading from the N-terminus, the 345-residue chain is Transcription factor STKL1 (345 aa).

The disordered stretch occupies residues 1 to 145; that stretch reads MASLENPAID…KKGHAQRVWS (145 aa). Residues 11 to 22 show a composition bias toward low complexity; that stretch reads SSSEFESSSEEI. The span at 23 to 32 shows a compositional bias: basic and acidic residues; the sequence is SSSKESKPKE. Positions 37-46 are enriched in polar residues; sequence VPSTKTLNSP. Ser105 is subject to Phosphoserine. Residues 114–137 show a composition bias toward basic and acidic residues; sequence RASEGTTSRDMHVKRIKKEGDNKK.

It belongs to the GeBP family. Expressed strongly in leaves and flowers, weakly in roots, and very weakly in stems.

It localises to the nucleus. Functionally, transcription repressor that binds DNA in a sequence-specific manner, 5'-GCCT-3', to regulate the expression of PGR. Acts as a modulatory component for the glucose-triggered developmental leaf growth process. The sequence is that of Transcription factor STKL1 from Arabidopsis thaliana (Mouse-ear cress).